We begin with the raw amino-acid sequence, 330 residues long: Uracil-DNA glycosylase, mitochondrial (330 aa).

The transit peptide at 1–49 directs the protein to the mitochondrion; sequence MASSTPKTLMDFFQPAKRLKASPSSSSFPAVSVAGGSRDLGSVANSPPR. The active-site Proton acceptor is the D173.

It belongs to the uracil-DNA glycosylase (UDG) superfamily. UNG family.

Its subcellular location is the mitochondrion. It catalyses the reaction Hydrolyzes single-stranded DNA or mismatched double-stranded DNA and polynucleotides, releasing free uracil.. With respect to regulation, inhidited by the small peptide uracil-DNA-glycosylase inhibitor (Ugi). In terms of biological role, excises uracil residues from the DNA which can arise as a result of misincorporation of dUMP residues by DNA polymerase or due to deamination of cytosine. More active on U:G, U:T and U:C mispairs than on U:A pairs. Highly specific for uracil and no activity with 5-substituted uracil or cytosine derivatives. Required for initiation of base excision repair (BER) of uracil. This chain is Uracil-DNA glycosylase, mitochondrial, found in Arabidopsis thaliana (Mouse-ear cress).